Reading from the N-terminus, the 318-residue chain is Ethyl acetate hydrolase (318 aa).

Residues Ser-165, Asp-261, and His-291 contribute to the active site.

Belongs to the 'GDXG' lipolytic enzyme family. As to quaternary structure, monomer.

It localises to the cytoplasm. It carries out the reaction ethyl acetate + H2O = ethanol + acetate + H(+). Its activity is regulated as follows. Inhibited by the serine protease inhibitor phenylmethylsulfonyl fluoride, the histidine reagent diethylpyrocarbonate and two sulfhydryl reagents, mercuric chloride and naphthol AS-D chloroacetate. Not inhibited by EDTA. Functionally, esterase that catalyzes the hydrolysis of ethyl acetate. Can also use propyl acetate and the chromogenic substrates alpha-naphthyl acetate, alpha-naphthyl propionate, alpha-naphthyl caproate and 4-nitrophenyl acetate, with a preference for short-chain aliphatic esters. Highest activity is obtained in vitro with propyl acetate, followed by ethyl acetate. In vivo, could be involved in pyoverdine biosynthesis, but its specific role and its in vivo substrate have not been identified. The chain is Ethyl acetate hydrolase from Pseudomonas putida (Arthrobacter siderocapsulatus).